The sequence spans 68 residues: Bifunctional protein GlmU (68 aa).

UDP-N-acetyl-alpha-D-glucosamine-binding positions include 9 to 12 (LAAG) and K23.

The protein in the N-terminal section; belongs to the N-acetylglucosamine-1-phosphate uridyltransferase family. In the C-terminal section; belongs to the transferase hexapeptide repeat family. In terms of assembly, homotrimer. Mg(2+) is required as a cofactor.

The protein resides in the cytoplasm. It carries out the reaction alpha-D-glucosamine 1-phosphate + acetyl-CoA = N-acetyl-alpha-D-glucosamine 1-phosphate + CoA + H(+). The enzyme catalyses N-acetyl-alpha-D-glucosamine 1-phosphate + UTP + H(+) = UDP-N-acetyl-alpha-D-glucosamine + diphosphate. The protein operates within nucleotide-sugar biosynthesis; UDP-N-acetyl-alpha-D-glucosamine biosynthesis; N-acetyl-alpha-D-glucosamine 1-phosphate from alpha-D-glucosamine 6-phosphate (route II): step 2/2. It participates in nucleotide-sugar biosynthesis; UDP-N-acetyl-alpha-D-glucosamine biosynthesis; UDP-N-acetyl-alpha-D-glucosamine from N-acetyl-alpha-D-glucosamine 1-phosphate: step 1/1. Its pathway is bacterial outer membrane biogenesis; LPS lipid A biosynthesis. Functionally, catalyzes the last two sequential reactions in the de novo biosynthetic pathway for UDP-N-acetylglucosamine (UDP-GlcNAc). The C-terminal domain catalyzes the transfer of acetyl group from acetyl coenzyme A to glucosamine-1-phosphate (GlcN-1-P) to produce N-acetylglucosamine-1-phosphate (GlcNAc-1-P), which is converted into UDP-GlcNAc by the transfer of uridine 5-monophosphate (from uridine 5-triphosphate), a reaction catalyzed by the N-terminal domain. This Priestia megaterium (Bacillus megaterium) protein is Bifunctional protein GlmU (glmU).